The primary structure comprises 549 residues: MAKSALHLARMSYQPKMPASLQGAVKIIEGKATEAVSDKEEIAAIFPRTYGLPLISFAPGGERTEYPPTNVGVILSGGQAPGGHNVIAGLFDEMKLLNPDSRLFGFLMGPDGLIEHKYRELTAEVIDEYRNTGGFDMIGSGRTKLDKPEQFEAGLEILRELDIKALVIIGGDDSNTNACILAEYYASIDAGIQVIGCPKTIDGDLKNKQIETSFGFDTAAKVYSELIGNIQRDCNSARKYWHFIKLMGRSASHITLECALQTHPNICIVSEEVEANNYYLDDVVTYIAETVVRRSEAGMNFGTVLIPEGLIEFLPAMKRLIKELNEFLSQNDAEFKLIKRSAQRQYIKNKLSPENSRLYDSLPVDVARQLIADRDPHGNVQVSLIATEKLLADMTAQKLAEWAEEGRFQGRFSTLTHFFGYEGRCAMPSNFDANYCYCLGRAASILIAAGKTGYMAAIKNTADPVSEWEAGGVPMTMMMNMERRSGKMKPVIRKALVDMDGEPYRALREMRREWALSTEYVYPGPIQFFGPEHVCDSPTMTLRLEKNDR.

Gly78 contributes to the diphosphate binding site. Asp172 is a Mg(2+) binding site. Substrate contacts are provided by residues 200–202 (TID), 239–240 (KY), 247–249 (MGR), Glu308, and 421–424 (YEGR). Asp202 (proton acceptor) is an active-site residue.

This sequence belongs to the phosphofructokinase type A (PFKA) family. PPi-dependent PFK group II subfamily. Clade 'Long' sub-subfamily. As to quaternary structure, homodimer. It depends on Mg(2+) as a cofactor.

It is found in the cytoplasm. The enzyme catalyses beta-D-fructose 6-phosphate + diphosphate = beta-D-fructose 1,6-bisphosphate + phosphate + H(+). It functions in the pathway carbohydrate degradation; glycolysis; D-glyceraldehyde 3-phosphate and glycerone phosphate from D-glucose: step 3/4. Non-allosteric. In terms of biological role, catalyzes the phosphorylation of D-fructose 6-phosphate, the first committing step of glycolysis. Uses inorganic phosphate (PPi) as phosphoryl donor instead of ATP like common ATP-dependent phosphofructokinases (ATP-PFKs), which renders the reaction reversible, and can thus function both in glycolysis and gluconeogenesis. Consistently, PPi-PFK can replace the enzymes of both the forward (ATP-PFK) and reverse (fructose-bisphosphatase (FBPase)) reactions. The sequence is that of Pyrophosphate--fructose 6-phosphate 1-phosphotransferase from Porphyromonas gingivalis (Bacteroides gingivalis).